Reading from the N-terminus, the 1274-residue chain is Myosin-binding protein C, cardiac-type (1274 aa).

The residue at position 1 (methionine 1) is an N-acetylmethionine. Serine 47 is modified (phosphoserine). A compositionally biased stretch (low complexity) spans 107-141 (APAPAEATGAPGEAPAPAAELGESAPSPKGSSSAA). The interval 107-153 (APAPAEATGAPGEAPAPAAELGESAPSPKGSSSAALNGPTPGAPDDP) is disordered. The Ig-like C2-type 1 domain maps to 153-256 (PIGLFVMRPQ…FDCSNFNLTV (104 aa)). Residues glutamine 208, histidine 210, glutamate 223, and histidine 225 each coordinate Zn(2+). Residues serine 275, serine 284, and serine 304 each carry the phosphoserine; by PKA and PKC modification. 2 positions are modified to phosphoserine: serine 311 and serine 427. 4 Ig-like C2-type domains span residues 362–452 (STAF…VKEP), 453–543 (PVLI…VQEK), 544–633 (KLEV…HFME), and 645–771 (PKIH…VIDV). Cysteine 436 and cysteine 443 form a disulfide bridge. Residue serine 550 is modified to Phosphoserine. Position 607 is a phosphothreonine (threonine 607). Fibronectin type-III domains are found at residues 774–870 (APAA…IGPP) and 872–967 (EPTH…VQEI). The region spanning 971 to 1065 (PRLQLPRHLR…ATLVLQVVDK (95 aa)) is the Ig-like C2-type 6 domain. In terms of domain architecture, Fibronectin type-III 3 spans 1068–1163 (PPQDLRVTDA…TKEPVFIPRP (96 aa)). Positions 1181 to 1274 (PSFTQPLVNR…ECRLEVRVPQ (94 aa)) constitute an Ig-like C2-type 7 domain. Residue arginine 1241 is modified to Omega-N-methylarginine.

The protein belongs to the immunoglobulin superfamily. MyBP family. Substrate for phosphorylation by PKA and PKC. Reversible phosphorylation appears to modulate contraction. In terms of processing, polyubiquitinated.

Functionally, thick filament-associated protein located in the crossbridge region of vertebrate striated muscle a bands. In vitro it binds MHC, F-actin and native thin filaments, and modifies the activity of actin-activated myosin ATPase. It may modulate muscle contraction or may play a more structural role. This Homo sapiens (Human) protein is Myosin-binding protein C, cardiac-type (MYBPC3).